Consider the following 932-residue polypeptide: Calpain-like protease palB/cpr-8 (932 aa).

The 324-residue stretch at 96 to 419 (KLHGNIFPPW…FDSLYVNWSP (324 aa)) folds into the Calpain catalytic domain. Active-site residues include Cys178, His346, and Asn366. A disordered region spans residues 890–932 (QGHVTEGSDDDGGGGGGGGGGVHVEISSDGVVSIGEWEVADED). Gly residues predominate over residues 902–911 (GGGGGGGGGV).

It belongs to the peptidase C2 family. PalB/RIM13 subfamily.

Its function is as follows. Required for the proteolytic cleavage of the transcription factor pacc-1 in response to alkaline ambient pH. The polypeptide is Calpain-like protease palB/cpr-8 (cpr-8) (Neurospora crassa (strain ATCC 24698 / 74-OR23-1A / CBS 708.71 / DSM 1257 / FGSC 987)).